We begin with the raw amino-acid sequence, 122 residues long: Large ribosomal subunit protein uL14 (122 aa).

This sequence belongs to the universal ribosomal protein uL14 family. Part of the 50S ribosomal subunit. Forms a cluster with proteins L3 and L19. In the 70S ribosome, L14 and L19 interact and together make contacts with the 16S rRNA in bridges B5 and B8.

Binds to 23S rRNA. Forms part of two intersubunit bridges in the 70S ribosome. The polypeptide is Large ribosomal subunit protein uL14 (Rickettsia africae (strain ESF-5)).